Reading from the N-terminus, the 117-residue chain is B-box domain protein 30 (117 aa).

The B box-type; atypical zinc finger occupies 27–73 (KAPVSCELCGENATVYCEADAAFLCRKCDRWVHSANFLARRHLRRVI). Zn(2+) contacts are provided by cysteine 32, cysteine 35, cysteine 54, and histidine 59. The PFVFL signature appears at 113 to 117 (PFVFL).

In terms of assembly, interacts with CO (via B-box) and with TPL (via PFVFL motif). As to expression, highly expressed in shoot apical meristems and in vascular tissues of leaves. Also detected in petioles.

It is found in the nucleus. Developmental regulator acting by forming heterodimeric complexes, that sequester CO and CO-like (COL) proteins into non-functional complexes. Engages CO and the transcriptional repressor TPL in a tripartite complex. Involved in the CO-mediated long-day flowering-promotion pathway. The sequence is that of B-box domain protein 30 from Arabidopsis thaliana (Mouse-ear cress).